A 597-amino-acid chain; its full sequence is Pentatricopeptide repeat-containing protein At2g21090 (597 aa).

13 PPR repeats span residues 45-79, 81-111, 112-142, 143-177, 178-212, 213-243, 244-274, 275-309, 310-344, 345-375, 377-411, 412-447, and 448-478; these read PFDLLASLLQQCGDTKSLKQGKWIHRHLKITGFKR, NTLLSNHLIGMYMKCGKPIDACKVFDQMHLR, NLYSWNNMVSGYVKSGMLVRARVVFDSMPER, DVVSWNTMVIGYAQDGNLHEALWFYKEFRRSGIKF, NEFSFAGLLTACVKSRQLQLNRQAHGQVLVAGFLS, NVVLSCSIIDAYAKCGQMESAKRCFDEMTVK, DIHIWTTLISGYAKLGDMEAAEKLFCEMPEK, NPVSWTALIAGYVRQGSGNRALDLFRKMIALGVKP, EQFTFSSCLCASASIASLRHGKEIHGYMIRTNVRP, NAIVISSLIDMYSKSGSLEASERVFRICDDK, DCVFWNTMISALAQHGLGHKALRMLDDMIKFRVQP, NRTTLVVILNACSHSGLVEEGLRWFESMTVQHGIVP, and DQEHYACLIDLLGRAGCFKELMRKIEEMPFE. The type E motif stretch occupies residues 483–558; that stretch reads IWNAILGVCR…EKAVSWIEIE (76 aa). The interval 559 to 591 is type E(+) motif; it reads KKVEAFTVSDGSHAHARKEEIYFILHNLAAVIE.

Belongs to the PPR family. PCMP-E subfamily.

This is Pentatricopeptide repeat-containing protein At2g21090 (PCMP-E48) from Arabidopsis thaliana (Mouse-ear cress).